Here is a 108-residue protein sequence, read N- to C-terminus: MSAQTNSGIQQLLEAEKVARNIVEKARQHRTQRLKDARLEAKREIDEYASKKEEEFKKSESQASGIYSQAEAESKKQVQDTFASIETSSQKNSDKVVDAILSITCNVK.

A compositionally biased stretch (basic and acidic residues) spans 48–60 (YASKKEEEFKKSE). Residues 48–89 (YASKKEEEFKKSESQASGIYSQAEAESKKQVQDTFASIETSS) are disordered. Polar residues predominate over residues 79–89 (QDTFASIETSS).

This sequence belongs to the V-ATPase G subunit family. In terms of assembly, V-ATPase is a heteromultimeric enzyme composed of a peripheral catalytic V1 complex (components A to H) attached to an integral membrane V0 proton pore complex (components: a, c, c', c'', d, e, f and VOA1).

Its subcellular location is the vacuole membrane. Subunit of the V1 complex of vacuolar(H+)-ATPase (V-ATPase), a multisubunit enzyme composed of a peripheral complex (V1) that hydrolyzes ATP and a membrane integral complex (V0) that translocates protons. V-ATPase is responsible for acidifying and maintaining the pH of intracellular compartments. This is V-type proton ATPase subunit G (vma10) from Schizosaccharomyces pombe (strain 972 / ATCC 24843) (Fission yeast).